The chain runs to 592 residues: Aspartate--tRNA ligase (592 aa).

Residue glutamate 173 participates in L-aspartate binding. The segment at 197–200 (QLFK) is aspartate. Position 219 (arginine 219) interacts with L-aspartate. ATP is bound by residues 219 to 221 (RDE) and glutamine 228. Histidine 448 is a binding site for L-aspartate. Glutamate 482 contacts ATP. L-aspartate is bound at residue arginine 489. 534–537 (GLDR) contacts ATP.

Belongs to the class-II aminoacyl-tRNA synthetase family. Type 1 subfamily. Homodimer.

The protein localises to the cytoplasm. The enzyme catalyses tRNA(Asp) + L-aspartate + ATP = L-aspartyl-tRNA(Asp) + AMP + diphosphate. Its function is as follows. Catalyzes the attachment of L-aspartate to tRNA(Asp) in a two-step reaction: L-aspartate is first activated by ATP to form Asp-AMP and then transferred to the acceptor end of tRNA(Asp). The chain is Aspartate--tRNA ligase from Shewanella baltica (strain OS155 / ATCC BAA-1091).